Here is a 269-residue protein sequence, read N- to C-terminus: F-box protein At5g52880 (269 aa).

The F-box domain maps to 109 to 155; it reads DIDIPSLPQDILIHIFSFLEISSLVSSAQVSRSWNQATHENSLWQSQ.

This Arabidopsis thaliana (Mouse-ear cress) protein is F-box protein At5g52880.